The chain runs to 648 residues: MPYSHGKKLKPSLKLAKTISTSSFVSSTTSNSFSPLEDSTSASSSTSSSSSGKSVRFAAHLYTVKKFNTKLAPISISEKAASNLTRNLHNNAIPLTFPFIGGEDHRYSLDILDYSDLEYDNKDVEYDNESDVEDNAMLMHDRSMFIEKEILCFGEEETFDMADWKLVSNNLNPFKSDYKVDVTGLEDKIFKYLNGQNIKVHSLELSDPVSYEDICSNNFGNCQIWGLIFVNNLNFEKKIEIKFTLNNWADIHYINAHYNKSVTPHVDEFKFIIDISALKLNLISKNLIYTNFFERKTTCLLNLQFCCRYDVNGFEYRSFYDNNDYKNYEITISLSAINLNRAVSNSSIFNSNLGPSKMGASNAEVTMSKNNENSKKPLRKFIKDTDYYNDSPLKHKFYQSFETKAACKTEPVSQTFKAETIDCEIEPFNYFFEPPDSQTNEDMSDSSYDLSLQDFNYWEFSNHGLGKALADSDILQFKNYPKPEPFSRPPIIDDTFTLNTDDRTLGSKTQKLEDNLAKEWKSAKTRTTLNETPLHDDEHRTSFTYTTWNNSTDTLMKRKEERPVESASCSQLSIATIKAEEDLLYQDYINSGRESSSPEISPLNTTTSLPFFPGDNMSDSSGEYEERTSLSPNKIHIFRDYFYKSPSP.

The segment covering 20–51 (STSSFVSSTTSNSFSPLEDSTSASSSTSSSSS) has biased composition (low complexity). Residues 20–52 (STSSFVSSTTSNSFSPLEDSTSASSSTSSSSSG) form a disordered region. The 131-residue stretch at 201–331 (HSLELSDPVS…NNDYKNYEIT (131 aa)) folds into the CBM21 domain. Polar residues predominate over residues 593-609 (RESSSPEISPLNTTTSL). Residues 593 to 629 (RESSSPEISPLNTTTSLPFFPGDNMSDSSGEYEERTS) form a disordered region.

In terms of biological role, regulates the activity of glycogen synthase. It is most probably a regulatory subunit for protein phosphatase type 1. The polypeptide is Serine/threonine-protein phosphatase 1 regulatory subunit PIG1 (PIG1) (Saccharomyces cerevisiae (strain ATCC 204508 / S288c) (Baker's yeast)).